A 415-amino-acid chain; its full sequence is Adenylosuccinate synthetase (415 aa).

GTP contacts are provided by residues 11–17 (GDEGKGK) and 39–41 (GHT). Asp-12 functions as the Proton acceptor in the catalytic mechanism. Mg(2+)-binding residues include Asp-12 and Gly-39. IMP-binding positions include 12 to 15 (DEGK), 37 to 40 (NAGH), Thr-124, Arg-138, Gln-218, Thr-233, and Arg-297. His-40 acts as the Proton donor in catalysis. Residue 293 to 299 (TTTGRAR) coordinates substrate. Residues Arg-299, 325-327 (KLD), and 403-405 (STS) contribute to the GTP site.

It belongs to the adenylosuccinate synthetase family. In terms of assembly, homodimer. The cofactor is Mg(2+).

Its subcellular location is the cytoplasm. It carries out the reaction IMP + L-aspartate + GTP = N(6)-(1,2-dicarboxyethyl)-AMP + GDP + phosphate + 2 H(+). It functions in the pathway purine metabolism; AMP biosynthesis via de novo pathway; AMP from IMP: step 1/2. Functionally, plays an important role in the de novo pathway of purine nucleotide biosynthesis. Catalyzes the first committed step in the biosynthesis of AMP from IMP. The sequence is that of Adenylosuccinate synthetase from Helicobacter hepaticus (strain ATCC 51449 / 3B1).